The sequence spans 124 residues: S-adenosylmethionine decarboxylase proenzyme (124 aa).

S63 functions as the Schiff-base intermediate with substrate; via pyruvic acid in the catalytic mechanism. The residue at position 63 (S63) is a Pyruvic acid (Ser); by autocatalysis. H68 functions as the Proton acceptor; for processing activity in the catalytic mechanism. Catalysis depends on C83, which acts as the Proton donor; for catalytic activity.

This sequence belongs to the prokaryotic AdoMetDC family. Type 1 subfamily. Heterotetramer of two alpha and two beta chains arranged as a dimer of alpha/beta heterodimers. Requires pyruvate as cofactor. In terms of processing, is synthesized initially as an inactive proenzyme. Formation of the active enzyme involves a self-maturation process in which the active site pyruvoyl group is generated from an internal serine residue via an autocatalytic post-translational modification. Two non-identical subunits are generated from the proenzyme in this reaction, and the pyruvate is formed at the N-terminus of the alpha chain, which is derived from the carboxyl end of the proenzyme. The post-translation cleavage follows an unusual pathway, termed non-hydrolytic serinolysis, in which the side chain hydroxyl group of the serine supplies its oxygen atom to form the C-terminus of the beta chain, while the remainder of the serine residue undergoes an oxidative deamination to produce ammonia and the pyruvoyl group blocking the N-terminus of the alpha chain.

The catalysed reaction is S-adenosyl-L-methionine + H(+) = S-adenosyl 3-(methylsulfanyl)propylamine + CO2. It functions in the pathway amine and polyamine biosynthesis; S-adenosylmethioninamine biosynthesis; S-adenosylmethioninamine from S-adenosyl-L-methionine: step 1/1. In terms of biological role, catalyzes the decarboxylation of S-adenosylmethionine to S-adenosylmethioninamine (dcAdoMet), the propylamine donor required for the synthesis of the polyamines spermine and spermidine from the diamine putrescine. The polypeptide is S-adenosylmethionine decarboxylase proenzyme (Anoxybacillus flavithermus (strain DSM 21510 / WK1)).